The chain runs to 33 residues: RRICRCRIGRCLGLEVYFGVCFLHGRLARRCCR.

3 cysteine pairs are disulfide-bonded: cysteine 4-cysteine 32, cysteine 6-cysteine 21, and cysteine 11-cysteine 31.

The protein belongs to the alpha-defensin family.

It is found in the secreted. In terms of biological role, has antibacterial activity against the Gram-negative bacterium E.coli and the Gram-positive bacteria L.monocytogenes and S.aureus. Has antifungal activity against C.albicans. The sequence is that of Defensin-1 from Papio hamadryas (Hamadryas baboon).